A 160-amino-acid chain; its full sequence is Salivary gland broad-spectrum antiviral protein (160 aa).

A helical membrane pass occupies residues 17–37 (VALGLYFTVVVFVLFITSVNL). Residues Asn-62 and Asn-145 are each glycosylated (N-linked (GlcNAc...) asparagine).

Salivary gland (at protein level).

It is found in the membrane. In terms of biological role, (Microbial infection) Modulates replication of Zika virus in salivary glands. Its function is as follows. (Microbial infection) Modulates replication of dengue virus type 2 in salivary glands. Functionally, (Microbial infection) Modulates replication of chikungunya virus in salivary glands. The chain is Salivary gland broad-spectrum antiviral protein from Aedes aegypti (Yellowfever mosquito).